The chain runs to 349 residues: 5-deoxyribose 1-phosphate isomerase (349 aa).

Substrate contacts are provided by residues 49–51 (RGA), R92, and Q199. The active-site Proton donor is the D240. Position 250–251 (250–251 (NK)) interacts with substrate.

The protein belongs to the EIF-2B alpha/beta/delta subunits family. DrdI subfamily.

It carries out the reaction 5-deoxy-alpha-D-ribose 1-phosphate = 5-deoxy-D-ribulose 1-phosphate. It participates in carbohydrate degradation. Catalyzes the isomerization of 5-deoxy-alpha-D-ribose 1-phosphate to 5-deoxy-D-ribulose 1-phosphate, as part of a 5-deoxyribose salvage pathway that recycles this toxic radical SAM enzyme by-product to mainstream metabolites. In Clostridium botulinum (strain Okra / Type B1), this protein is 5-deoxyribose 1-phosphate isomerase.